The sequence spans 87 residues: Omega-lycotoxin-Am1a (87 aa).

Positions 1–17 (MKLSIFFVLFFIAIAYC) are cleaved as a signal peptide. Residues 18-40 (QPEFLDDEEDEVEETLPVAEEGR) constitute a propeptide that is removed on maturation. Intrachain disulfides connect C44/C59, C51/C64, C58/C84, and C66/C82.

The protein belongs to the neurotoxin omega-lctx family. In terms of tissue distribution, expressed by the venom gland.

It is found in the secreted. Modulates Cav2.1/CACNA1A voltage-gated calcium channels (P/Q-type currents) in rat cerebellar Purkinje cells and hippocampal CA1-CA3 neurons. At saturating concentrations (&gt;10 nM) decelerates activation kinetics and slightly increases peak amplitude without affecting deactivation kinetics. In vivo, does not cause death when intravenously injected into mice. In rat models, through its activity on Cav2.1/CACNA1A, has an ameliorative effect on memory defects provoked by hyperstimulation of N-methyl-D-aspartate receptors (NMDARs) in the hippocampus. This chain is Omega-lycotoxin-Am1a, found in Alopecosa marikovskyi (Wolf spider).